The chain runs to 188 residues: NADH-quinone oxidoreductase subunit I (188 aa).

2 4Fe-4S ferredoxin-type domains span residues 44–74 and 90–119; these read LNRY…VEGA and QVYQ…MTNE. 8 residues coordinate [4Fe-4S] cluster: Cys-54, Cys-57, Cys-60, Cys-64, Cys-99, Cys-102, Cys-105, and Cys-109. The tract at residues 167 to 188 is disordered; the sequence is TGGAAAAAQDESEVDDTAGDRP. Acidic residues predominate over residues 176-188; that stretch reads DESEVDDTAGDRP.

The protein belongs to the complex I 23 kDa subunit family. As to quaternary structure, NDH-1 is composed of 14 different subunits. Subunits NuoA, H, J, K, L, M, N constitute the membrane sector of the complex. The cofactor is [4Fe-4S] cluster.

The protein resides in the cell membrane. The catalysed reaction is a quinone + NADH + 5 H(+)(in) = a quinol + NAD(+) + 4 H(+)(out). Its function is as follows. NDH-1 shuttles electrons from NADH, via FMN and iron-sulfur (Fe-S) centers, to quinones in the respiratory chain. The immediate electron acceptor for the enzyme in this species is believed to be ubiquinone. Couples the redox reaction to proton translocation (for every two electrons transferred, four hydrogen ions are translocated across the cytoplasmic membrane), and thus conserves the redox energy in a proton gradient. The chain is NADH-quinone oxidoreductase subunit I from Rhodococcus jostii (strain RHA1).